A 163-amino-acid chain; its full sequence is Bacterial microcompartment assembly protein PduM (163 aa).

This sequence belongs to the PduM family. Interacts with shell protein PduK.

The protein localises to the bacterial microcompartment. It functions in the pathway polyol metabolism; 1,2-propanediol degradation. In terms of biological role, plays an essential role in assembly and/or stability of the bacterial microcompartment (BMC) dedicated to 1,2-propanediol (1,2-PD) degradation. Expression of a cosmid containing the full 21-gene pdu operon in E.coli allows E.coli to grow on 1,2-propanediol (1,2-PD) with the appearance of bacterial microcompartments (BMC) in its cytoplasm. Functionally, the 1,2-PD-specific bacterial microcompartment (BMC) concentrates low levels of 1,2-PD catabolic enzymes, concentrates volatile reaction intermediates thus enhancing pathway flux and keeps the level of toxic, mutagenic propionaldehyde low. The sequence is that of Bacterial microcompartment assembly protein PduM from Citrobacter freundii.